Reading from the N-terminus, the 712-residue chain is Saccharolysin (712 aa).

At serine 73 the chain carries Phosphoserine. Zn(2+) is bound at residue histidine 501. The active site involves glutamate 502. Zn(2+) contacts are provided by histidine 505 and histidine 508.

This sequence belongs to the peptidase M3 family. Zn(2+) is required as a cofactor.

It localises to the cytoplasm. It carries out the reaction Cleavage of Pro-|-Phe and Ala-|-Ala bonds.. Could be involved in late stage of protein degradation. The sequence is that of Saccharolysin (PRD1) from Saccharomyces cerevisiae (strain ATCC 204508 / S288c) (Baker's yeast).